Here is a 319-residue protein sequence, read N- to C-terminus: Ninja-family protein AFP4 (319 aa).

Positions 39-54 (DSEHGENQQEAKKRED) are enriched in basic and acidic residues. Disordered regions lie at residues 39 to 63 (DSEHGENQQEAKKREDEAEEDEKDV), 99 to 120 (FVFDEQRSGGGNGGDMRRIVGR), and 205 to 228 (VTGPVNGKGKNGNTAKKQKNNVEN).

This sequence belongs to the Ninja family. In terms of assembly, interacts with ABI5/DPBF1, AREB3/DPBF3, EEL/DPBF4, ABF1 and ABF3/DPBF5. As to expression, predominantly expressed in roots and seedlings.

The protein resides in the nucleus. Functionally, acts as a negative regulator of abscisic acid (ABA) and salinity responses. The polypeptide is Ninja-family protein AFP4 (AFP4) (Arabidopsis thaliana (Mouse-ear cress)).